A 195-amino-acid polypeptide reads, in one-letter code: ATP-dependent Clp protease proteolytic subunit (195 aa).

Residue Ser98 is the Nucleophile of the active site. His123 is an active-site residue.

This sequence belongs to the peptidase S14 family. As to quaternary structure, fourteen ClpP subunits assemble into 2 heptameric rings which stack back to back to give a disk-like structure with a central cavity, resembling the structure of eukaryotic proteasomes.

It localises to the cytoplasm. It carries out the reaction Hydrolysis of proteins to small peptides in the presence of ATP and magnesium. alpha-casein is the usual test substrate. In the absence of ATP, only oligopeptides shorter than five residues are hydrolyzed (such as succinyl-Leu-Tyr-|-NHMec, and Leu-Tyr-Leu-|-Tyr-Trp, in which cleavage of the -Tyr-|-Leu- and -Tyr-|-Trp bonds also occurs).. Cleaves peptides in various proteins in a process that requires ATP hydrolysis. Has a chymotrypsin-like activity. Plays a major role in the degradation of misfolded proteins. The polypeptide is ATP-dependent Clp protease proteolytic subunit (Alkaliphilus oremlandii (strain OhILAs) (Clostridium oremlandii (strain OhILAs))).